The following is a 316-amino-acid chain: Beta-ketoacyl-[acyl-carrier-protein] synthase III (316 aa).

Active-site residues include Cys112 and His243. The interval Gln244–Arg248 is ACP-binding. Asn273 is an active-site residue.

Belongs to the thiolase-like superfamily. FabH family. In terms of assembly, homodimer.

Its subcellular location is the cytoplasm. It carries out the reaction malonyl-[ACP] + acetyl-CoA + H(+) = 3-oxobutanoyl-[ACP] + CO2 + CoA. It participates in lipid metabolism; fatty acid biosynthesis. In terms of biological role, catalyzes the condensation reaction of fatty acid synthesis by the addition to an acyl acceptor of two carbons from malonyl-ACP. Catalyzes the first condensation reaction which initiates fatty acid synthesis and may therefore play a role in governing the total rate of fatty acid production. Possesses both acetoacetyl-ACP synthase and acetyl transacylase activities. Its substrate specificity determines the biosynthesis of branched-chain and/or straight-chain of fatty acids. In Haemophilus ducreyi (strain 35000HP / ATCC 700724), this protein is Beta-ketoacyl-[acyl-carrier-protein] synthase III.